The following is a 574-amino-acid chain: Probable E3 ubiquitin-protein ligase ipaH4.5 (574 aa).

The interval 1 to 284 (MKPINNHSFF…YHGPQIYFSM (284 aa)) is interaction with target proteins. LRR repeat units lie at residues 63–82 (REPVLNLSLLKLRSLPPLPL), 83–104 (HIRELNISNNELISLPENSPLL), 105–122 (TELHVNGNNLNILPTLPS), 123–143 (QLIKLNISFNRNLSCLPSLPP), 144–165 (YLQSLSARFNSLETLPELPSTL), 166–183 (TILRIEGNRLTVLPELPH), 184–205 (RLQELFVSGNRLQELPEFPQSL), 206–223 (KYLKVGENQLRRLSRLPQ), 224–246 (ELLALDVSNNLLTSLPENIITLP), and 247–270 (ICTNVNISGNPLSTHVLQSLQRLT). The interval 285–292 (SDGQQNTL) is linker. An E3 ubiquitin-protein ligase catalytic domain region spans residues 293 to 574 (HRPLADAVTA…YRQLTDEVLA (282 aa)). The NEL domain maps to 295 to 574 (PLADAVTAWF…YRQLTDEVLA (280 aa)). Cys-379 serves as the catalytic Glycyl thioester intermediate.

This sequence belongs to the LRR-containing bacterial E3 ligase family. Post-translationally, ubiquitinated in the presence of host E1 ubiquitin-activating enzyme, E2 ubiquitin-conjugating enzyme and ubiquitin.

Its subcellular location is the secreted. The protein resides in the host cytoplasm. The enzyme catalyses S-ubiquitinyl-[E2 ubiquitin-conjugating enzyme]-L-cysteine + [acceptor protein]-L-lysine = [E2 ubiquitin-conjugating enzyme]-L-cysteine + N(6)-ubiquitinyl-[acceptor protein]-L-lysine.. Effector proteins function to alter host cell physiology and promote bacterial survival in host tissues. This protein is an E3 ubiquitin ligase that interferes with host's ubiquitination pathway. The chain is Probable E3 ubiquitin-protein ligase ipaH4.5 (ipaH4.5) from Shigella flexneri.